Consider the following 361-residue polypeptide: Protein TIFY 8 (361 aa).

Disordered stretches follow at residues 53–78 (NKAAKAAMTPSTASASSAGGLGGLSS), 113–134 (RFSGNKRSNSDSHFTTQEHPET), 190–232 (QTAA…RKDL), and 268–361 (SGGS…KEAT). The span at 56 to 78 (AKAAMTPSTASASSAGGLGGLSS) shows a compositional bias: low complexity. Polar residues-rich tracts occupy residues 113–127 (RFSGNKRSNSDSHFT) and 208–232 (SSFTMPNSSKLESFAPSNTGNRKDL). Positions 232–267 (LASSTKQMTIFYGGQAHVFDDVHPNKADVIMALAGS) constitute a Tify domain. The span at 333 to 361 (GREHQGSIISRGRDIRDPVHRSDPEKEAT) shows a compositional bias: basic and acidic residues.

The protein belongs to the TIFY/JAZ family. Interacts with AFPH2/NINJA. Post-translationally, ubiquitinated. Targeted for degradation by the SCF(COI1) E3 ubiquitin ligase-proteasome pathway during jasmonate signaling.

The protein resides in the nucleus. In terms of biological role, repressor of jasmonate responses. The polypeptide is Protein TIFY 8 (Arabidopsis thaliana (Mouse-ear cress)).